The chain runs to 402 residues: CCA-adding enzyme (402 aa).

Residues glycine 32 and arginine 35 each coordinate ATP. Positions 32 and 35 each coordinate CTP. Residues aspartate 45 and aspartate 47 each coordinate Mg(2+). ATP-binding residues include arginine 116, aspartate 159, arginine 162, arginine 165, and arginine 168. CTP contacts are provided by arginine 116, aspartate 159, arginine 162, arginine 165, and arginine 168.

Belongs to the tRNA nucleotidyltransferase/poly(A) polymerase family. Bacterial CCA-adding enzyme type 3 subfamily. As to quaternary structure, homodimer. It depends on Mg(2+) as a cofactor.

The enzyme catalyses a tRNA precursor + 2 CTP + ATP = a tRNA with a 3' CCA end + 3 diphosphate. The catalysed reaction is a tRNA with a 3' CCA end + 2 CTP + ATP = a tRNA with a 3' CCACCA end + 3 diphosphate. Functionally, catalyzes the addition and repair of the essential 3'-terminal CCA sequence in tRNAs without using a nucleic acid template. Adds these three nucleotides in the order of C, C, and A to the tRNA nucleotide-73, using CTP and ATP as substrates and producing inorganic pyrophosphate. tRNA 3'-terminal CCA addition is required both for tRNA processing and repair. Also involved in tRNA surveillance by mediating tandem CCA addition to generate a CCACCA at the 3' terminus of unstable tRNAs. While stable tRNAs receive only 3'-terminal CCA, unstable tRNAs are marked with CCACCA and rapidly degraded. The sequence is that of CCA-adding enzyme from Streptococcus thermophilus (strain CNRZ 1066).